A 394-amino-acid polypeptide reads, in one-letter code: Alanine--glyoxylate aminotransferase (394 aa).

Pyridoxal 5'-phosphate-binding positions include 76 to 78 (AGH), S153, and Q204. A substrate-binding site is contributed by S153. Residue K205 is modified to N6-(pyridoxal phosphate)lysine. The pyridoxal 5'-phosphate site is built by Y256 and T259. Residue R356 coordinates substrate.

It belongs to the class-V pyridoxal-phosphate-dependent aminotransferase family. As to quaternary structure, homodimer. The cofactor is pyridoxal 5'-phosphate.

The protein localises to the peroxisome. It carries out the reaction glyoxylate + L-alanine = glycine + pyruvate. The enzyme catalyses (2S)-2-aminobutanoate + glyoxylate = 2-oxobutanoate + glycine. It catalyses the reaction glyoxylate + L-phenylalanine = 3-phenylpyruvate + glycine. The catalysed reaction is glyoxylate + L-serine = 3-hydroxypyruvate + glycine. It carries out the reaction 2-oxobutanoate + L-alanine = (2S)-2-aminobutanoate + pyruvate. The enzyme catalyses L-phenylalanine + pyruvate = 3-phenylpyruvate + L-alanine. It catalyses the reaction L-serine + pyruvate = 3-hydroxypyruvate + L-alanine. Its function is as follows. Catalyzes the pyridoxal 5'-phosphate-dependent transamination of alanine with glyoxylate as an amino group acceptor. Can also catalyze, although with much less efficiency, the transamination of amino-butyrate, phenylalanine and serine with glyoxylate or pyruvate as an amino group acceptor. Does not catalyze the transamination of both 3-hydroxykynurenine and L-kynurenine. May play a role in the detoxification of glyoxylate, a toxic plant metabolite from the fly diet. The sequence is that of Alanine--glyoxylate aminotransferase from Drosophila melanogaster (Fruit fly).